Here is a 390-residue protein sequence, read N- to C-terminus: Chorismate synthase (390 aa).

NADP(+) contacts are provided by Arg39 and Arg45. Residues Arg132–Ser134, Asn253–Ala254, Gly298, Lys313–Thr317, and Arg339 each bind FMN.

The protein belongs to the chorismate synthase family. As to quaternary structure, homotetramer. It depends on FMNH2 as a cofactor.

The enzyme catalyses 5-O-(1-carboxyvinyl)-3-phosphoshikimate = chorismate + phosphate. Its pathway is metabolic intermediate biosynthesis; chorismate biosynthesis; chorismate from D-erythrose 4-phosphate and phosphoenolpyruvate: step 7/7. Its function is as follows. Catalyzes the anti-1,4-elimination of the C-3 phosphate and the C-6 proR hydrogen from 5-enolpyruvylshikimate-3-phosphate (EPSP) to yield chorismate, which is the branch point compound that serves as the starting substrate for the three terminal pathways of aromatic amino acid biosynthesis. This reaction introduces a second double bond into the aromatic ring system. In Bacillus cytotoxicus (strain DSM 22905 / CIP 110041 / 391-98 / NVH 391-98), this protein is Chorismate synthase.